The following is a 51-amino-acid chain: Large ribosomal subunit protein eL40 (51 aa).

The protein belongs to the eukaryotic ribosomal protein eL40 family.

In Thermococcus gammatolerans (strain DSM 15229 / JCM 11827 / EJ3), this protein is Large ribosomal subunit protein eL40.